The following is a 352-amino-acid chain: Uroporphyrinogen decarboxylase (352 aa).

Residues 27-31, Asp-77, Tyr-154, Thr-209, and His-325 each bind substrate; that span reads RQAGR.

This sequence belongs to the uroporphyrinogen decarboxylase family. Homodimer.

It is found in the cytoplasm. It carries out the reaction uroporphyrinogen III + 4 H(+) = coproporphyrinogen III + 4 CO2. It functions in the pathway porphyrin-containing compound metabolism; protoporphyrin-IX biosynthesis; coproporphyrinogen-III from 5-aminolevulinate: step 4/4. Catalyzes the decarboxylation of four acetate groups of uroporphyrinogen-III to yield coproporphyrinogen-III. The polypeptide is Uroporphyrinogen decarboxylase (Legionella pneumophila (strain Paris)).